Consider the following 305-residue polypeptide: Coiled-coil domain-containing protein 50 (305 aa).

An N-acetylalanine modification is found at Ala2. Ser5 is subject to Phosphoserine. Positions 86-130 form a coiled coil; that stretch reads EIAQEIQEKLTIEAERRRIQEKKDEDIARLLQEKELQEEKRRKKH. 2 disordered regions span residues 122 to 142 and 218 to 305; these read QEEK…VFGD and KKAK…HNKQ. 2 stretches are compositionally biased toward basic and acidic residues: residues 218–239 and 247–263; these read KKAK…ECKL and KSKE…DRPS. The span at 279–305 shows a compositional bias: polar residues; that stretch reads THFTNQHSTTWHLPKSESSQKGFHNKQ.

Interacts with RNF126. In terms of processing, phosphorylated on tyrosine residues. In terms of tissue distribution, widely expressed.

Its subcellular location is the cytoplasm. In terms of biological role, involved in EGFR signaling. This is Coiled-coil domain-containing protein 50 (Ccdc50) from Mus musculus (Mouse).